Consider the following 90-residue polypeptide: DNA-directed RNA polymerase subunit Rpo11 (90 aa).

Belongs to the archaeal Rpo11/eukaryotic RPB11/RPC19 RNA polymerase subunit family. As to quaternary structure, part of the 13-subunit RNA polymerase complex.

The protein resides in the cytoplasm. The enzyme catalyses RNA(n) + a ribonucleoside 5'-triphosphate = RNA(n+1) + diphosphate. DNA-dependent RNA polymerase (RNAP) catalyzes the transcription of DNA into RNA using the four ribonucleoside triphosphates as substrates. In Sulfolobus acidocaldarius (strain ATCC 33909 / DSM 639 / JCM 8929 / NBRC 15157 / NCIMB 11770), this protein is DNA-directed RNA polymerase subunit Rpo11.